Reading from the N-terminus, the 199-residue chain is Recombination protein RecR (199 aa).

Residues 56–71 (CAICGNVSEKETCGIC) form a C4-type zinc finger. A Toprim domain is found at 79–174 (ATICVVEEAK…RVTRLASGLP (96 aa)).

It belongs to the RecR family.

May play a role in DNA repair. It seems to be involved in an RecBC-independent recombinational process of DNA repair. It may act with RecF and RecO. The polypeptide is Recombination protein RecR (Clavibacter michiganensis subsp. michiganensis (strain NCPPB 382)).